The primary structure comprises 723 residues: Beta-xylosidase (723 aa).

The signal sequence occupies residues 1–19 (MKKLWLMGLLLASFFTTVA).

The protein belongs to the glycosyl hydrolase 3 family.

It is found in the periplasm. Functionally, xylosidase involved in ulvan degradation. Ulvan is the main polysaccharide component of the Ulvales (green seaweed) cell wall. It is composed of disaccharide building blocks comprising 3-sulfated rhamnose (Rha3S) linked to D-glucuronic acid (GlcA), L-iduronic acid (IduA), or D-xylose (Xyl). Beta-xylosidase converts Xyl-Rha3S, a product of alpha-L-rhamnosidase acting on Rha-Xyl-Rha3S oligosaccharides, further to Xyl and Rha3S. The enzyme is able to degrade 4-methylumbelliferyl-beta-D-xylopyranoside (MUX) in vitro. The sequence is that of Beta-xylosidase from Formosa agariphila (strain DSM 15362 / KCTC 12365 / LMG 23005 / KMM 3901 / M-2Alg 35-1).